The following is an 899-amino-acid chain: Protein suppressor of hairy wing (899 aa).

Disordered regions lie at residues 1-33 (MSAQ…RTGT), 45-127 (AAVA…KKMD), and 171-206 (AKEN…AKRR). Over residues 21–31 (SDGDKPKEKRT) the composition is skewed to basic and acidic residues. Positions 45–55 (AAVASKGASVS) are enriched in low complexity. Polar residues-rich tracts occupy residues 67–83 (KILN…STKG) and 102–111 (RSSAPASSAV). The span at 183–198 (VDEDDDDDDDDEDEGV) shows a compositional bias: acidic residues. The C2H2-type 1; atypical zinc-finger motif lies at 218-240 (HVCGKCYKTFRRVKSLKKHLEFC). The C2H2-type 2 zinc-finger motif lies at 288 to 311 (INCPDCPKSFKTQTSYERHIFITH). The segment at 318–340 (YPCSICNAKLRSGALLKLHEQQH) adopts a C2H2-type 3; atypical zinc-finger fold. 9 consecutive C2H2-type zinc fingers follow at residues 347–365 (FACK…LKCH), 379–401 (MSCK…LKQH), 412–434 (YMCH…IRTH), 440–462 (FDCD…RRYH), 468–490 (YTCT…MKRH), 496–518 (HKCN…SKTH), 522–544 (YACS…VKDH), 552–576 (FACT…AGDH), and 594–617 (TDCA…RSVH). Disordered stretches follow at residues 646–665 (EQKE…GSLI), 702–734 (PLEG…VVKK), and 865–899 (GDED…ESEA). The segment covering 874-899 (ETDKGKDREADNTDTDTREDAVESEA) has biased composition (basic and acidic residues).

It localises to the nucleus. Functionally, component of the gypsy chromatin insulator complex which is required for the function of the gypsy chromatin insulator and other endogenous chromatin insulators. Chromatin insulators are regulatory elements which establish independent domains of transcriptional activity within eukaryotic genomes. Insulators have two defining properties; they can block the communication between an enhancer and a promoter when placed between them and can also buffer transgenes from position effect variegation (PEV). Insulators are proposed to structure the chromatin fiber into independent domains of differing transcriptional potential by promoting the formation of distinct chromatin loops. This chromatin looping may involve the formation of insulator bodies, where homotypic interactions between individual subunits of the insulator complex could promote the clustering of widely spaced insulators at the nuclear periphery. Within the gypsy insulator complex, this protein binds specifically to a region of the gypsy element located 3' of the 5' long terminal repeat (LTR), and may also mediate interaction with other endogenous insulators at sites distinct from those recognized by Cp190. Cooperates with pita and cliff to recruit Cp190 and regulate insulator function at the front-ultraabdominal (Fub) boundary. The sequence is that of Protein suppressor of hairy wing (su(Hw)) from Drosophila virilis (Fruit fly).